The chain runs to 2512 residues: Fatty acid synthase (2512 aa).

The residue at position 2 (E2) is an N-acetylglutamate. Residues 2–406 (EDVVIAGIAG…GSNAHVILRP (405 aa)) form the Ketosynthase family 3 (KS3) domain. Active-site for beta-ketoacyl synthase activity residues include C161, H293, and H331. Positions 427-815 (GRTQEAVEIL…GINVLGNNLF (389 aa)) are acyl and malonyl transferases. The active-site For acyl/malonyl transferase activity is the S580. An acyl-CoA contacts are provided by residues 646–647 (DT), F670, and R772. The N-terminal hotdog fold stretch occupies residues 844 to 967 (PKAEDFPSGS…ISLLENDALK (124 aa)). Residues 844-1111 (PKAEDFPSGS…ASVAPRRQQE (268 aa)) form the PKS/mFAS DH domain. H878 (proton acceptor; for dehydratase activity) is an active-site residue. Residues 984–1111 (AKSGLLMEDV…ASVAPRRQQE (128 aa)) form a C-terminal hotdog fold region. Residue D1034 is the Proton donor; for dehydratase activity of the active site. Position 1475 is an S-nitrosocysteine (C1475). Residues 1638-1866 (WEVPENWTLE…MIKIQEEEKQ (229 aa)) form an enoyl reductase region. 1675–1692 (VLIHSGSGGVGQAAIAIA) lines the NADP(+) pocket. K1708 carries the post-translational modification N6-(pyridoxal phosphate)lysine. The tract at residues 1867-2119 (YPLRSEPVKL…SFVLAEKVSV (253 aa)) is beta-ketoacyl reductase. 1889–1904 (SYIITGGLGGFGLELA) serves as a coordination point for NADP(+). C2093 is modified (S-nitrosocysteine). In terms of domain architecture, Carrier spans 2120–2200 (KSEGGSQRDL…ELSSKTGTAE (81 aa)). Residue S2158 is modified to O-(pantetheine 4'-phosphoryl)serine. The tract at residues 2209–2511 (KTGPGEPPKL…LAEPRVSVRE (303 aa)) is thioesterase. Catalysis depends on for thioesterase activity residues S2309 and H2482.

In terms of assembly, homodimer which is arranged in a head to tail fashion. Post-translationally, S-nitrosylation of Fatty acid synthase at cysteine residues Cys-1475 or Cys-2093 is important for the enzyme dimerization. In adipocytes, S-nitrosylation of Fatty acid synthase occurs under physiological conditions and gradually increases during adipogenesis.

It carries out the reaction acetyl-CoA + n malonyl-CoA + 2n NADPH + 2n H(+) = a long-chain fatty acid + (n+1) CoA + n CO2 + 2n NADP(+).. The catalysed reaction is holo-[ACP] + acetyl-CoA = acetyl-[ACP] + CoA. It catalyses the reaction holo-[ACP] + malonyl-CoA = malonyl-[ACP] + CoA. The enzyme catalyses a fatty acyl-[ACP] + malonyl-[ACP] + H(+) = a 3-oxoacyl-[ACP] + holo-[ACP] + CO2. It carries out the reaction a (3R)-hydroxyacyl-[ACP] + NADP(+) = a 3-oxoacyl-[ACP] + NADPH + H(+). The catalysed reaction is a (3R)-hydroxyacyl-[ACP] = a (2E)-enoyl-[ACP] + H2O. It catalyses the reaction a 2,3-saturated acyl-[ACP] + NADP(+) = a (2E)-enoyl-[ACP] + NADPH + H(+). The enzyme catalyses hexadecanoyl-[ACP] + H2O = hexadecanoate + holo-[ACP] + H(+). It carries out the reaction acetyl-[ACP] + malonyl-[ACP] + H(+) = 3-oxobutanoyl-[ACP] + holo-[ACP] + CO2. The catalysed reaction is 3-oxobutanoyl-[ACP] + NADPH + H(+) = (3R)-hydroxybutanoyl-[ACP] + NADP(+). It catalyses the reaction (3R)-hydroxybutanoyl-[ACP] = (2E)-butenoyl-[ACP] + H2O. The enzyme catalyses (2E)-butenoyl-[ACP] + NADPH + H(+) = butanoyl-[ACP] + NADP(+). It carries out the reaction butanoyl-[ACP] + malonyl-[ACP] + H(+) = 3-oxohexanoyl-[ACP] + holo-[ACP] + CO2. The catalysed reaction is 3-oxohexanoyl-[ACP] + NADPH + H(+) = (3R)-hydroxyhexanoyl-[ACP] + NADP(+). It catalyses the reaction (3R)-hydroxyhexanoyl-[ACP] = (2E)-hexenoyl-[ACP] + H2O. The enzyme catalyses (2E)-hexenoyl-[ACP] + NADPH + H(+) = hexanoyl-[ACP] + NADP(+). It carries out the reaction hexanoyl-[ACP] + malonyl-[ACP] + H(+) = 3-oxooctanoyl-[ACP] + holo-[ACP] + CO2. The catalysed reaction is 3-oxooctanoyl-[ACP] + NADPH + H(+) = (3R)-hydroxyoctanoyl-[ACP] + NADP(+). It catalyses the reaction (3R)-hydroxyoctanoyl-[ACP] = (2E)-octenoyl-[ACP] + H2O. The enzyme catalyses (2E)-octenoyl-[ACP] + NADPH + H(+) = octanoyl-[ACP] + NADP(+). It carries out the reaction octanoyl-[ACP] + malonyl-[ACP] + H(+) = 3-oxodecanoyl-[ACP] + holo-[ACP] + CO2. The catalysed reaction is 3-oxodecanoyl-[ACP] + NADPH + H(+) = (3R)-hydroxydecanoyl-[ACP] + NADP(+). It catalyses the reaction (3R)-hydroxydecanoyl-[ACP] = (2E)-decenoyl-[ACP] + H2O. The enzyme catalyses (2E)-decenoyl-[ACP] + NADPH + H(+) = decanoyl-[ACP] + NADP(+). It carries out the reaction decanoyl-[ACP] + malonyl-[ACP] + H(+) = 3-oxododecanoyl-[ACP] + holo-[ACP] + CO2. The catalysed reaction is 3-oxododecanoyl-[ACP] + NADPH + H(+) = (3R)-hydroxydodecanoyl-[ACP] + NADP(+). It catalyses the reaction (3R)-hydroxydodecanoyl-[ACP] = (2E)-dodecenoyl-[ACP] + H2O. The enzyme catalyses (2E)-dodecenoyl-[ACP] + NADPH + H(+) = dodecanoyl-[ACP] + NADP(+). It carries out the reaction dodecanoyl-[ACP] + malonyl-[ACP] + H(+) = 3-oxotetradecanoyl-[ACP] + holo-[ACP] + CO2. The catalysed reaction is 3-oxotetradecanoyl-[ACP] + NADPH + H(+) = (3R)-hydroxytetradecanoyl-[ACP] + NADP(+). It catalyses the reaction (3R)-hydroxytetradecanoyl-[ACP] = (2E)-tetradecenoyl-[ACP] + H2O. The enzyme catalyses (2E)-tetradecenoyl-[ACP] + NADPH + H(+) = tetradecanoyl-[ACP] + NADP(+). It carries out the reaction tetradecanoyl-[ACP] + malonyl-[ACP] + H(+) = 3-oxohexadecanoyl-[ACP] + holo-[ACP] + CO2. The catalysed reaction is 3-oxohexadecanoyl-[ACP] + NADPH + H(+) = (3R)-hydroxyhexadecanoyl-[ACP] + NADP(+). It catalyses the reaction (3R)-hydroxyhexadecanoyl-[ACP] = (2E)-hexadecenoyl-[ACP] + H2O. The enzyme catalyses (2E)-hexadecenoyl-[ACP] + NADPH + H(+) = hexadecanoyl-[ACP] + NADP(+). It carries out the reaction hexadecanoyl-[ACP] + malonyl-[ACP] + H(+) = 3-oxooctadecanoyl-[ACP] + holo-[ACP] + CO2. The catalysed reaction is 3-oxooctadecanoyl-[ACP] + NADPH + H(+) = (3R)-hydroxyoctadecanoyl-[ACP] + NADP(+). It catalyses the reaction (3R)-hydroxyoctadecanoyl-[ACP] = (2E)-octadecenoyl-[ACP] + H2O. The enzyme catalyses (2E)-octadecenoyl-[ACP] + NADPH + H(+) = octadecanoyl-[ACP] + NADP(+). It carries out the reaction tetradecanoyl-[ACP] + H2O = tetradecanoate + holo-[ACP] + H(+). The catalysed reaction is octadecanoyl-[ACP] + H2O = octadecanoate + holo-[ACP] + H(+). It participates in lipid metabolism; fatty acid biosynthesis. Cerulenin, a potent non-competitive pharmacological inhibitor of FAS, binds covalently to the active site of the condensing enzyme region, inactivating a key enzyme step in fatty acid synthesis. In terms of biological role, fatty acid synthetase is a multifunctional enzyme that catalyzes the de novo biosynthesis of long-chain saturated fatty acids starting from acetyl-CoA and malonyl-CoA in the presence of NADPH. This multifunctional protein contains 7 catalytic activities and a site for the binding of the prosthetic group 4'-phosphopantetheine of the acyl carrier protein ([ACP]) domain. The sequence is that of Fatty acid synthase (FASN) from Gallus gallus (Chicken).